The following is a 396-amino-acid chain: Elongation factor Tu (396 aa).

Residues 10–206 (KPHCNIGTIG…AVDAYIPQPE (197 aa)) form the tr-type G domain. The segment at 19–26 (GHVDHGKT) is G1. 19-26 (GHVDHGKT) provides a ligand contact to GTP. T26 contacts Mg(2+). Residues 60-64 (GITIS) form a G2 region. Positions 81 to 84 (DCPG) are G3. GTP is bound by residues 81-85 (DCPGH) and 136-139 (NKCD). The G4 stretch occupies residues 136–139 (NKCD). The tract at residues 174–176 (SAL) is G5.

This sequence belongs to the TRAFAC class translation factor GTPase superfamily. Classic translation factor GTPase family. EF-Tu/EF-1A subfamily. As to quaternary structure, monomer.

It is found in the cytoplasm. The catalysed reaction is GTP + H2O = GDP + phosphate + H(+). In terms of biological role, GTP hydrolase that promotes the GTP-dependent binding of aminoacyl-tRNA to the A-site of ribosomes during protein biosynthesis. This chain is Elongation factor Tu, found in Nitrobacter winogradskyi (strain ATCC 25391 / DSM 10237 / CIP 104748 / NCIMB 11846 / Nb-255).